We begin with the raw amino-acid sequence, 642 residues long: MAEEAAPSESRAAGRLSLELCAEALPGRREEVGHEDTASHRRPRADPRRWASGLLLLLWLLEAPLLLGVRAQAAGQVSGPGQQAPPPPQPQQSGQQYNGERGISIPDHGYCQPISIPLCTDIAYNQTIMPNLLGHTNQEDAGLEVHQFYPLVKVQCSAELKFFLCSMYAPVCTVLEQALPPCRSLCERARQGCEALMNKFGFQWPDTLKCEKFPVHGAGELCVGQNTSDKGTPTPSLLPEFWTSNPQHGGGGYRGGYPGGAGTVERGKFSCPRALRVPSYLNYHFLGEKDCGAPCEPTKVYGLMYFGPEELRFSRTWIGIWSVLCCASTLFTVLTYLVDMRRFSYPERPIIFLSGCYTAVAVAYIAGFLLEDRVVCNDKFAEDGARTVAQGTKKEGCTILFMMLYFFSMASSIWWVILSLTWFLAAGMKWGHEAIEANSQYFHLAAWAVPAIKTITILALGQVDGDVLSGVCFVGLNNVDALRGFVLAPLFVYLFIGTSFLLAGFVSLFRIRTIMKHDGTKTEKLEKLMVRIGVFSVLYTVPATIVIACYFYEQAFRDQWERSWVAQSCKSYAIPCPHLQGGGGVPPHPPMSPDFTVFMIKYLMTLIVGITSGFWIWSGKTLNSWRKFYTRLTNSKQGETTV.

The signal sequence occupies residues 1 to 68; the sequence is MAEEAAPSES…WLLEAPLLLG (68 aa). 2 disordered regions span residues 26–45 and 76–99; these read PGRR…RPRA and QVSG…QYNG. Residues 69-317 are Extracellular-facing; that stretch reads VRAQAAGQVS…PEELRFSRTW (249 aa). In terms of domain architecture, FZ spans 106–225; that stretch reads PDHGYCQPIS…HGAGELCVGQ (120 aa). 5 cysteine pairs are disulfide-bonded: C111-C172, C119-C165, C156-C193, C182-C222, and C186-C210. N125 carries N-linked (GlcNAc...) asparagine glycosylation. A glycan (N-linked (GlcNAc...) asparagine) is linked at N226. A helical transmembrane segment spans residues 318 to 338; sequence IGIWSVLCCASTLFTVLTYLV. Topologically, residues 339-349 are cytoplasmic; sequence DMRRFSYPERP. A helical transmembrane segment spans residues 350-370; it reads IIFLSGCYTAVAVAYIAGFLL. The Extracellular portion of the chain corresponds to 371–397; it reads EDRVVCNDKFAEDGARTVAQGTKKEGC. The chain crosses the membrane as a helical span at residues 398 to 418; the sequence is TILFMMLYFFSMASSIWWVIL. Over 419-440 the chain is Cytoplasmic; sequence SLTWFLAAGMKWGHEAIEANSQ. The helical transmembrane segment at 441 to 461 threads the bilayer; it reads YFHLAAWAVPAIKTITILALG. Over 462-484 the chain is Extracellular; the sequence is QVDGDVLSGVCFVGLNNVDALRG. A helical membrane pass occupies residues 485–505; that stretch reads FVLAPLFVYLFIGTSFLLAGF. The Cytoplasmic segment spans residues 506–531; it reads VSLFRIRTIMKHDGTKTEKLEKLMVR. The helical transmembrane segment at 532–552 threads the bilayer; it reads IGVFSVLYTVPATIVIACYFY. At 553–593 the chain is on the extracellular side; the sequence is EQAFRDQWERSWVAQSCKSYAIPCPHLQGGGGVPPHPPMSP. Residues 594–614 form a helical membrane-spanning segment; sequence DFTVFMIKYLMTLIVGITSGF. The Cytoplasmic portion of the chain corresponds to 615-642; it reads WIWSGKTLNSWRKFYTRLTNSKQGETTV. The Lys-Thr-X-X-X-Trp motif, mediates interaction with the PDZ domain of Dvl family members motif lies at 620 to 625; that stretch reads KTLNSW. Residues 640–642 carry the PDZ-binding motif; that stretch reads TTV.

The protein belongs to the G-protein coupled receptor Fz/Smo family. Interacts with MYOC. Interacts with WNT7B. In terms of processing, ubiquitinated by ZNRF3, leading to its degradation by the proteasome. Expressed in chondrocytes.

It localises to the cell membrane. In terms of biological role, receptor for Wnt proteins. Activated by WNT7B. Activated by WNT3A, WNT3, WNT1 and to a lesser extent WNT2, but apparently not by WNT4, WNT5A, WNT5B, WNT6, WNT7A or WNT7B. Contradictory results showing activation by WNT7B have been described for mouse. Functions in the canonical Wnt/beta-catenin signaling pathway. The canonical Wnt/beta-catenin signaling pathway leads to the activation of disheveled proteins, inhibition of GSK-3 kinase, nuclear accumulation of beta-catenin and activation of Wnt target genes. A second signaling pathway involving PKC and calcium fluxes has been seen for some family members, but it is not yet clear if it represents a distinct pathway or if it can be integrated in the canonical pathway, as PKC seems to be required for Wnt-mediated inactivation of GSK-3 kinase. Both pathways seem to involve interactions with G-proteins. May be involved in transduction and intercellular transmission of polarity information during tissue morphogenesis and/or in differentiated tissues. In Mus musculus (Mouse), this protein is Frizzled-1 (Fzd1).